Reading from the N-terminus, the 1481-residue chain is Cystic fibrosis transmembrane conductance regulator (1481 aa).

Over 1-77 the chain is Cytoplasmic; sequence MQKSPLVKAS…KLINALRRCF (77 aa). Residues 78–98 form a helical membrane-spanning segment; that stretch reads LWRFIFYGILLYLGEVTKAVQ. The 285-residue stretch at 81-365 folds into the ABC transmembrane type-1 1 domain; sequence FIFYGILLYL…GAVQTWYDSL (285 aa). Over 99-122 the chain is Extracellular; sequence PLLLGRIIASYDPDNKEERSIAIY. Residues 123 to 146 traverse the membrane as a helical segment; that stretch reads LAIGLCLLFIVRTLLLHPAIFGLQ. The Cytoplasmic segment spans residues 147-195; that stretch reads HIGMQMRIAMFSLIYKKTLKLSSRVLDKISIGQLVSLLSNNLNKFDEGL. A helical membrane pass occupies residues 196-216; the sequence is ALAHFVWIAPLQVTLLMGLLW. At 217–222 the chain is on the extracellular side; that stretch reads DLLQAS. The chain crosses the membrane as a helical span at residues 223–243; the sequence is AFCGLAVLIVLALFQAWLGKM. At 244 to 298 the chain is on the cytoplasmic side; it reads MMKYRDQRAGKINERLVITSEMIENIQSVKAYCWEEAMEKMIENLRQTELKLTRK. A helical transmembrane segment spans residues 299–319; that stretch reads AAYMRYFNSAAFFFSGFFVVF. Residues 320-339 lie on the Extracellular side of the membrane; the sequence is LSVLPYAFLQGIILRKIFTT. Residues 340 to 358 form a helical membrane-spanning segment; the sequence is ISFCIVLRMAITRQFPGAV. Over 359–859 the chain is Cytoplasmic; it reads QTWYDSLGAI…YLRYITVHKS (501 aa). Residues tryptophan 401, serine 435, 459–466, and glutamine 494 contribute to the ATP site; that span reads GSTGAGKT. The region spanning 424-647 is the ABC transporter 1 domain; the sequence is NGDNKLFFSN…RPDFSSKLMG (224 aa). Cysteine 525 carries S-palmitoyl cysteine lipidation. Position 550 is a phosphoserine (serine 550). A disordered R region region spans residues 655 to 832; it reads SAERRNSILT…EEINEEDLKE (178 aa). A phosphoserine; by PKA mark is found at serine 661 and serine 671. A Phosphoserine; by PKC modification is found at serine 687. Residue lysine 689 forms a Glycyl lysine isopeptide (Lys-Gly) (interchain with G-Cter in ubiquitin) linkage. Phosphoserine; by PKA is present on residues serine 701 and serine 713. Threonine 718 is subject to Phosphothreonine. A phosphoserine; by PKA mark is found at serine 738, serine 769, serine 796, and serine 814. A helical membrane pass occupies residues 860 to 880; that stretch reads LILVLIWCLIIFLAEVAASLV. The ABC transmembrane type-1 2 domain occupies 860–1156; the sequence is LILVLIWCLI…AVNSSIDVDS (297 aa). The Extracellular portion of the chain corresponds to 881–919; it reads VLWLLKNNTPQQEMNSTQSGNRSYPVIITNTSFYYIFYI. N-linked (GlcNAc...) asparagine glycans are attached at residues asparagine 895 and asparagine 901. The discontinuously helical transmembrane segment at 920 to 940 threads the bilayer; it reads YVGVADTLLALGLFRGLPLVH. Residues 941 to 991 lie on the Cytoplasmic side of the membrane; it reads TLITVSKILHHKMLRSVLQAPMSTLNALKAGGILNRFSKDIAILDDLLPLT. Residues 992-1012 traverse the membrane as a helical segment; that stretch reads IFDFIQLLLIVIGAIAVVSVL. Topologically, residues 1013 to 1014 are extracellular; it reads QP. The helical transmembrane segment at 1015–1035 threads the bilayer; the sequence is YIFLATVPVIAAFIMLRAYFL. Over 1036 to 1096 the chain is Cytoplasmic; the sequence is HTSQQLKQLE…TANWFLYLST (61 aa). Residues 1097–1117 traverse the membrane as a helical segment; that stretch reads LRWFQMRIEMIFVIFFIAVTF. Topologically, residues 1118 to 1131 are extracellular; the sequence is ISILTTGEGQGSVG. A helical membrane pass occupies residues 1132–1152; the sequence is IILTLAMNIMSTLQWAVNSSI. At 1153–1481 the chain is on the cytoplasmic side; it reads DVDSLMRSVS…TEEEVQETRL (329 aa). The region spanning 1211–1444 is the ABC transporter 2 domain; sequence MIVKDLTAKY…KSLFRQAISS (234 aa). ATP is bound by residues tyrosine 1220 and 1245–1252; that span reads GRTGSGKS. The interaction with GORASP2 stretch occupies residues 1387-1481; sequence RTIKQAFADC…TEEEVQETRL (95 aa). Cysteine 1396 carries S-palmitoyl cysteine lipidation. Residues serine 1445 and serine 1457 each carry the phosphoserine modification. Residues 1453 to 1462 are compositionally biased toward basic residues; the sequence is HRNSSKHKSR. The segment at 1453 to 1481 is disordered; it reads HRNSSKHKSRSQITALKEETEEEVQETRL. Acidic residues predominate over residues 1471–1481; it reads ETEEEVQETRL. The short motif at 1479 to 1481 is the PDZ-binding element; the sequence is TRL.

It belongs to the ABC transporter superfamily. ABCC family. CFTR transporter (TC 3.A.1.202) subfamily. Monomer; does not require oligomerization for channel activity. May form oligomers in the membrane. Interacts with SLC26A3, SLC26A6 and NHERF1. Interacts with SHANK2. Interacts with MYO6. Interacts (via C-terminus) with GOPC (via PDZ domain); this promotes CFTR internalization and thereby decreases channel activity. Interacts with SLC4A7 through NHERF1. Found in a complex with MYO5B and RAB11A. Interacts with ANO1. Interacts with SLC26A8. Interacts with AHCYL1; the interaction increases CFTR activity. Interacts with CSE1L. The core-glycosylated form interacts with GORASP2 (via PDZ GRASP-type 1 domain) in respone to ER stress. Interacts with MARCHF2; the interaction leads to CFTR ubiqtuitination and degradation. Interacts with ADGRG2. Post-translationally, N-glycosylated. Phosphorylated; cAMP treatment promotes phosphorylation and activates the channel. Dephosphorylation decreases the ATPase activity (in vitro). Phosphorylation at PKA sites activates the channel. Phosphorylation at PKC sites enhances the response to phosphorylation by PKA. Phosphorylated by AMPK; this inhibits channel activity. In terms of processing, ubiquitinated, leading to its degradation in the lysosome. Deubiquitination by USP10 in early endosomes enhances its endocytic recycling to the cell membrane. Ubiquitinated by RNF185 during ER stress. Ubiquitinated by MARCHF2.

It localises to the apical cell membrane. The protein localises to the early endosome membrane. The protein resides in the cell membrane. Its subcellular location is the recycling endosome membrane. It is found in the endoplasmic reticulum membrane. It localises to the nucleus. It catalyses the reaction ATP + H2O + closed Cl(-) channel = ADP + phosphate + open Cl(-) channel.. The catalysed reaction is chloride(in) = chloride(out). The enzyme catalyses hydrogencarbonate(in) = hydrogencarbonate(out). It carries out the reaction ATP + H2O = ADP + phosphate + H(+). Its function is as follows. Epithelial ion channel that plays an important role in the regulation of epithelial ion and water transport and fluid homeostasis. Mediates the transport of chloride ions across the cell membrane. Possesses an intrinsic ATPase activity and utilizes ATP to gate its channel; the passive flow of anions through the channel is gated by cycles of ATP binding and hydrolysis by the ATP-binding domains. The ion channel is also permeable to HCO(3)(-); selectivity depends on the extracellular chloride concentration. Exerts its function also by modulating the activity of other ion channels and transporters. Contributes to the regulation of the pH and the ion content of the epithelial fluid layer. Modulates the activity of the epithelial sodium channel (ENaC) complex, in part by regulating the cell surface expression of the ENaC complex. May regulate bicarbonate secretion and salvage in epithelial cells by regulating the transporter SLC4A7. Can inhibit the chloride channel activity of ANO1. Plays a role in the chloride and bicarbonate homeostasis during sperm epididymal maturation and capacitation. In Cavia porcellus (Guinea pig), this protein is Cystic fibrosis transmembrane conductance regulator.